Here is an 89-residue protein sequence, read N- to C-terminus: Putative defensin-like protein 254 (89 aa).

An N-terminal signal peptide occupies residues 1-20; that stretch reads MHNISFKLLLLCDLFLSSSS. 2 disulfides stabilise this stretch: Cys31–Cys48 and Cys37–Cys55.

It belongs to the DEFL family.

The protein localises to the secreted. This is Putative defensin-like protein 254 from Arabidopsis thaliana (Mouse-ear cress).